The primary structure comprises 182 residues: Adenylate kinase (182 aa).

ATP is bound at residue 12–17; that stretch reads GAGKGT. Residues 32–61 are NMP; the sequence is STGELLRKEIEMNTNLGIQVKDIMNRGELV. Residues T33, R38, 59-61, 85-88, and Q92 contribute to the AMP site; these read ELV and GYPR. Residues 126–132 form an LID region; the sequence is LRGRKDD. R127 is a binding site for ATP. R129 and R140 together coordinate AMP. R168 is an ATP binding site.

The protein belongs to the adenylate kinase family. In terms of assembly, monomer.

The protein localises to the cytoplasm. It catalyses the reaction AMP + ATP = 2 ADP. It functions in the pathway purine metabolism; AMP biosynthesis via salvage pathway; AMP from ADP: step 1/1. Functionally, catalyzes the reversible transfer of the terminal phosphate group between ATP and AMP. Plays an important role in cellular energy homeostasis and in adenine nucleotide metabolism. The sequence is that of Adenylate kinase from Prochlorococcus marinus (strain AS9601).